The following is a 360-amino-acid chain: Squamosa promoter-binding-like protein 7 (360 aa).

Gly residues predominate over residues 74–89 (AQGSGGGGGGGGGGSA). The tract at residues 74 to 98 (AQGSGGGGGGGGGGSADQGKRKEKA) is disordered. The SBP-type zinc finger occupies 105 to 182 (VPRCQVEGCD…AGHNERRRRS (78 aa)). Residues Cys-108, Cys-113, Cys-130, His-133, Cys-149, Cys-152, His-156, and Cys-168 each contribute to the Zn(2+) site. The Bipartite nuclear localization signal signature appears at 165 to 181 (KKSCRRRLAGHNERRRR). Positions 172 to 182 (LAGHNERRRRS) are enriched in basic residues. Disordered stretches follow at residues 172 to 196 (LAGH…AHPH), 261 to 306 (FFSD…HEHQ), and 320 to 360 (AAGG…ARVV).

In terms of tissue distribution, expressed in young panicles.

It localises to the nucleus. Functionally, trans-acting factor that binds specifically to the consensus nucleotide sequence 5'-TNCGTACAA-3'. May be involved in panicle development. The protein is Squamosa promoter-binding-like protein 7 (SPL7) of Oryza sativa subsp. indica (Rice).